A 288-amino-acid chain; its full sequence is Transmembrane protein 163 (288 aa).

Residues 1-11 show a composition bias toward basic and acidic residues; that stretch reads MERAPGSERRS. The disordered stretch occupies residues 1-64; sequence MERAPGSERR…ESGQFSDGFE (64 aa). At 1–87 the chain is on the cytoplasmic side; sequence MERAPGSERR…HEAQNYRKKA (87 aa). At S11 the chain carries Phosphoserine. A compositionally biased stretch (pro residues) spans 12-24; sequence PPGPGVPRPPPRG. A compositionally biased stretch (low complexity) spans 25 to 42; that stretch reads HAPSTAAPAPNPAPLSSS. A required for interaction with MCOLN1 region spans residues 41 to 71; that stretch reads SSMQPDEERQPRISESGQFSDGFEDRGLLES. A phosphoserine mark is found at S54, S56, and S60. A helical membrane pass occupies residues 88–108; it reads LWVSWLSIIVTLALAVAAFTV. Residues 109–115 lie on the Extracellular side of the membrane; the sequence is SVMRYSA. A helical transmembrane segment spans residues 116–136; sequence SAFGFAFDAILDVLSSAIVLW. Topologically, residues 137-149 are cytoplasmic; sequence RYSNAAAVHSAHR. Residues 150–170 traverse the membrane as a helical segment; it reads EYIACVILGVIFLLSSICIVV. The Extracellular portion of the chain corresponds to 171–186; the sequence is KAIHDLSTRLLPEVDD. The chain crosses the membrane as a helical span at residues 187–207; that stretch reads FLFSVSILSGILCSVLAVLKF. Residues 208 to 216 lie on the Cytoplasmic side of the membrane; it reads MLGKVLTSR. The helical transmembrane segment at 217–237 threads the bilayer; the sequence is ALITDGFNSLVGGVMGFSILL. Over 238 to 254 the chain is Extracellular; sequence SAEVFKHNAAVWYLDGS. Residues 255–275 form a helical membrane-spanning segment; it reads IGVLIGLTIFAYGVKLLIDMV. Over 276–288 the chain is Cytoplasmic; sequence PRVRQTRHYEMFE.

Belongs to the TMEM163 family. In terms of assembly, homodimer. Interacts with MCOLN1. Interacts with SLC30A1, SLC30A2, SLC30A3 and SLC30A4. As to expression, strongly expressed in brain. Also detected in lung, liver, kidney and spleen. Mainly expressed in the glutaminergic neuron subpopulations.

It is found in the cytoplasmic vesicle. It localises to the secretory vesicle. Its subcellular location is the synaptic vesicle membrane. The protein localises to the early endosome membrane. The protein resides in the late endosome membrane. It is found in the lysosome membrane. It localises to the cell membrane. It catalyses the reaction Zn(2+)(in) = Zn(2+)(out). Zinc ion transporter that mediates zinc efflux and plays a crucial role in intracellular zinc homeostasis. Binds the divalent cations Zn(2+), Ni(2+), and to a minor extent Cu(2+). Is a functional modulator of P2X purinoceptors, including P2RX1, P2RX3, P2RX4 and P2RX7. Plays a role in central nervous system development and is required for myelination, and survival and proliferation of oligodendrocytes. In Rattus norvegicus (Rat), this protein is Transmembrane protein 163 (Tmem163).